We begin with the raw amino-acid sequence, 104 residues long: Iron-sulfur cluster assembly protein CyaY (104 aa).

Belongs to the frataxin family.

Its function is as follows. Involved in iron-sulfur (Fe-S) cluster assembly. May act as a regulator of Fe-S biogenesis. This chain is Iron-sulfur cluster assembly protein CyaY, found in Aeromonas hydrophila subsp. hydrophila (strain ATCC 7966 / DSM 30187 / BCRC 13018 / CCUG 14551 / JCM 1027 / KCTC 2358 / NCIMB 9240 / NCTC 8049).